Consider the following 1048-residue polypeptide: Platelet-derived growth factor receptor beta (1048 aa).

An N-terminal signal peptide occupies residues 1–30; that stretch reads MLRASAMRAAVLHLTVALAALLSSCTTVSC. The Extracellular portion of the chain corresponds to 31–528; it reads LKIVPEEKQL…LVSSSLFSQV (498 aa). The region spanning 35–124 is the Ig-like C2-type 1 domain; sequence PEEKQLILAE…EIKEVAVFVP (90 aa). 2 disulfide bridges follow: Cys52–Cys108 and Cys153–Cys194. 4 N-linked (GlcNAc...) asparagine glycosylation sites follow: Asn87, Asn159, Asn224, and Asn239. Ig-like C2-type domains are found at residues 216–309 and 319–406; these read PEDI…ASVN and AVKS…KEVT. An intrachain disulfide couples Cys240 to Cys293. Residues Asn309, Asn327, and Asn457 are each glycosylated (N-linked (GlcNAc...) asparagine). Cys434 and Cys503 form a disulfide bridge. The chain crosses the membrane as a helical span at residues 529-549; the sequence is VLLAVVLTLVPIIIMSIIILI. Residues 550–1048 are Cytoplasmic-facing; it reads AVWKKKPRYE…PIPDPKPEKS (499 aa). Residues Tyr558, Tyr575, and Tyr577 each carry the phosphotyrosine; by autocatalysis modification. The Protein kinase domain occupies 596-957; sequence LVLGRTLGSG…FLVHCVGDML (362 aa). ATP is bound by residues 602–610 and Lys630; that span reads LGSGAFGRV. Phosphotyrosine; by autocatalysis is present on residues Tyr735, Tyr746, Tyr758, Tyr766, and Tyr770. Asp821 functions as the Proton acceptor in the catalytic mechanism. Phosphotyrosine; by autocatalysis is present on residues Tyr852 and Tyr1036.

Belongs to the protein kinase superfamily. Tyr protein kinase family. CSF-1/PDGF receptor subfamily. In terms of assembly, interacts with homodimeric PDGFB and PDGFD, and with heterodimers formed by PDGFA and PDGFB. Monomer in the absence of bound ligand. Interaction with homodimeric PDGFB, heterodimers formed by PDGFA and PDGFB or homodimeric PDGFD, leads to receptor dimerization, where both PDGFRA homodimers and heterodimers with PDGFRB are observed. In terms of processing, ubiquitinated. After autophosphorylation, the receptor is polyubiquitinated, leading to its degradation. Post-translationally, autophosphorylated on tyrosine residues upon ligand binding. Autophosphorylation occurs in trans, i.e. one subunit of the dimeric receptor phosphorylates tyrosine residues on the other subunit.

The protein localises to the cell membrane. It localises to the cytoplasmic vesicle. The protein resides in the lysosome lumen. The enzyme catalyses L-tyrosyl-[protein] + ATP = O-phospho-L-tyrosyl-[protein] + ADP + H(+). Present in an inactive conformation in the absence of bound ligand. Binding of PDGFB and/or PDGFD leads to dimerization and activation by autophosphorylation on tyrosine residues. In terms of biological role, tyrosine-protein kinase that acts as a cell-surface receptor for homodimeric PDGFB and PDGFD and for heterodimers formed by PDGFA and PDGFB, and plays an essential role in the regulation of embryonic development, cell proliferation, survival, differentiation, chemotaxis and migration. Plays an essential role in blood vessel development by promoting proliferation, migration and recruitment of pericytes and smooth muscle cells to endothelial cells. Required for normal development of the cardiovascular system. Required for normal recruitment of pericytes (mesangial cells) in the kidney glomerulus, and for normal formation of a branched network of capillaries in kidney glomeruli. Promotes rearrangement of the actin cytoskeleton and the formation of membrane ruffles. Binding of its cognate ligands - homodimeric PDGFB, heterodimers formed by PDGFA and PDGFB or homodimeric PDGFD -leads to the activation of several signaling cascades; the response depends on the nature of the bound ligand and is modulated by the formation of heterodimers between PDGFRA and PDGFRB. Receptor signaling is down-regulated by protein phosphatases that dephosphorylate the receptor and its down-stream effectors, and by rapid internalization of the activated receptor. The chain is Platelet-derived growth factor receptor beta (pdgfrb) from Takifugu rubripes (Japanese pufferfish).